Consider the following 418-residue polypeptide: Cytochrome P450 monooxygenase ABA2 (418 aa).

Heme is bound at residue Cys355.

The protein belongs to the cytochrome P450 family. Heme serves as cofactor.

The protein operates within hormone biosynthesis. Cytochrome P450 monooxygenase involved in the biosynthesis of abscisic acid (ABA), a phytohormone that acts antagonistically toward salicylic acid (SA), jasmonic acid (JA) and ethylene (ETH) signaling, to impede plant defense responses. During pathogen-host interaction, ABA plays a dual role in disease severity by increasing plant susceptibility and accelerating pathogenesis in the fungus itself. The first step of the pathway catalyzes the reaction from farnesyl diphosphate to alpha-ionylideneethane performed by the alpha-ionylideneethane synthase ABA3 via a three-step reaction mechanism involving 2 neutral intermediates, beta-farnesene and allofarnesene. The cytochrome P450 monooxygenase ABA1 might then be involved in the conversion of alpha-ionylideneethane to alpha-ionylideneacetic acid. Alpha-ionylideneacetic acid is further converted to abscisic acid in 2 steps involving the cytochrome P450 monooxygenase ABA2 and the short-chain dehydrogenase/reductase ABA4, via the intermediates 1'-deoxy-ABA or 1',4'-trans-diol-ABA, depending on the order of action of these 2 enzymes. ABA2 is responsible for the hydroxylation of carbon atom C-1' and ABA4 might be involved in the oxidation of the C-4' carbon atom. This is Cytochrome P450 monooxygenase ABA2 from Pyricularia oryzae (strain Y34) (Rice blast fungus).